The sequence spans 125 residues: Prepro-urotensin II-alpha (125 aa).

The first 21 residues, 1-21 (MMCNLLLSFSVLLLSCTHLVA), serve as a signal peptide directing secretion. Residues 109–111 (QFR) constitute a propeptide that is removed on maturation. Cys-119 and Cys-124 are joined by a disulfide.

The protein belongs to the urotensin-2 family.

It is found in the secreted. In terms of biological role, urotensin is found in the teleost caudal neurosecretory system. It has a suggested role in osmoregulation and as a corticotropin-releasing factor. The non-hormonal portion of this precursor may be a urotensin binding protein, urophysin. The protein is Prepro-urotensin II-alpha of Cyprinus carpio (Common carp).